Here is a 197-residue protein sequence, read N- to C-terminus: Putative carbonic anhydrase YvdA (197 aa).

The Zn(2+) site is built by Cys41, Asp43, His99, and Cys102.

The protein belongs to the beta-class carbonic anhydrase family. Zn(2+) is required as a cofactor.

It catalyses the reaction hydrogencarbonate + H(+) = CO2 + H2O. Its function is as follows. Reversible hydration of carbon dioxide. In Bacillus subtilis (strain 168), this protein is Putative carbonic anhydrase YvdA (yvdA).